The chain runs to 271 residues: Ribosomal RNA small subunit methyltransferase A (271 aa).

S-adenosyl-L-methionine is bound by residues Asn-19, Leu-21, Gly-46, Glu-67, Asp-92, and Asn-113.

This sequence belongs to the class I-like SAM-binding methyltransferase superfamily. rRNA adenine N(6)-methyltransferase family. RsmA subfamily.

Its subcellular location is the cytoplasm. The catalysed reaction is adenosine(1518)/adenosine(1519) in 16S rRNA + 4 S-adenosyl-L-methionine = N(6)-dimethyladenosine(1518)/N(6)-dimethyladenosine(1519) in 16S rRNA + 4 S-adenosyl-L-homocysteine + 4 H(+). Specifically dimethylates two adjacent adenosines (A1518 and A1519) in the loop of a conserved hairpin near the 3'-end of 16S rRNA in the 30S particle. May play a critical role in biogenesis of 30S subunits. The polypeptide is Ribosomal RNA small subunit methyltransferase A (Photobacterium profundum (strain SS9)).